A 196-amino-acid polypeptide reads, in one-letter code: ATP-dependent Clp protease proteolytic subunit (196 aa).

The active-site Nucleophile is the S101. H126 is an active-site residue.

Belongs to the peptidase S14 family. Component of the chloroplastic Clp protease core complex.

The protein resides in the plastid. The protein localises to the chloroplast stroma. The catalysed reaction is Hydrolysis of proteins to small peptides in the presence of ATP and magnesium. alpha-casein is the usual test substrate. In the absence of ATP, only oligopeptides shorter than five residues are hydrolyzed (such as succinyl-Leu-Tyr-|-NHMec, and Leu-Tyr-Leu-|-Tyr-Trp, in which cleavage of the -Tyr-|-Leu- and -Tyr-|-Trp bonds also occurs).. In terms of biological role, cleaves peptides in various proteins in a process that requires ATP hydrolysis. Has a chymotrypsin-like activity. Plays a major role in the degradation of misfolded proteins. In Arabis hirsuta (Hairy rock-cress), this protein is ATP-dependent Clp protease proteolytic subunit.